The following is a 261-amino-acid chain: Glucosamine-6-phosphate deaminase (261 aa).

Asp67 (proton acceptor; for enolization step) is an active-site residue. Asp136 functions as the For ring-opening step in the catalytic mechanism. Catalysis depends on His138, which acts as the Proton acceptor; for ring-opening step. The active-site For ring-opening step is the Glu143.

This sequence belongs to the glucosamine/galactosamine-6-phosphate isomerase family. NagB subfamily.

It carries out the reaction alpha-D-glucosamine 6-phosphate + H2O = beta-D-fructose 6-phosphate + NH4(+). Its pathway is amino-sugar metabolism; N-acetylneuraminate degradation; D-fructose 6-phosphate from N-acetylneuraminate: step 5/5. In terms of biological role, catalyzes the reversible isomerization-deamination of glucosamine 6-phosphate (GlcN6P) to form fructose 6-phosphate (Fru6P) and ammonium ion. The chain is Glucosamine-6-phosphate deaminase from Streptomyces coelicolor (strain ATCC BAA-471 / A3(2) / M145).